Here is a 266-residue protein sequence, read N- to C-terminus: Glutamate racemase (266 aa).

Residues 9 to 10 (DS) and 41 to 42 (YG) contribute to the substrate site. C72 acts as the Proton donor/acceptor in catalysis. Substrate is bound at residue 73–74 (NT). The active-site Proton donor/acceptor is the C183. Substrate is bound at residue 184–185 (TH).

This sequence belongs to the aspartate/glutamate racemases family.

The enzyme catalyses L-glutamate = D-glutamate. The protein operates within cell wall biogenesis; peptidoglycan biosynthesis. Functionally, provides the (R)-glutamate required for cell wall biosynthesis. This is Glutamate racemase from Listeria monocytogenes serotype 4a (strain HCC23).